We begin with the raw amino-acid sequence, 636 residues long: 1-deoxy-D-xylulose-5-phosphate synthase (636 aa).

Thiamine diphosphate-binding positions include His-72 and 113 to 115 (GHA). Asp-144 provides a ligand contact to Mg(2+). Residues 145–146 (GA), Asn-174, Tyr-287, and Glu-370 contribute to the thiamine diphosphate site. Asn-174 contributes to the Mg(2+) binding site.

This sequence belongs to the transketolase family. DXPS subfamily. Homodimer. Mg(2+) serves as cofactor. Requires thiamine diphosphate as cofactor.

The catalysed reaction is D-glyceraldehyde 3-phosphate + pyruvate + H(+) = 1-deoxy-D-xylulose 5-phosphate + CO2. The protein operates within metabolic intermediate biosynthesis; 1-deoxy-D-xylulose 5-phosphate biosynthesis; 1-deoxy-D-xylulose 5-phosphate from D-glyceraldehyde 3-phosphate and pyruvate: step 1/1. Its function is as follows. Catalyzes the acyloin condensation reaction between C atoms 2 and 3 of pyruvate and glyceraldehyde 3-phosphate to yield 1-deoxy-D-xylulose-5-phosphate (DXP). In Rippkaea orientalis (strain PCC 8801 / RF-1) (Cyanothece sp. (strain PCC 8801)), this protein is 1-deoxy-D-xylulose-5-phosphate synthase.